A 242-amino-acid polypeptide reads, in one-letter code: ATP-dependent dethiobiotin synthetase BioD (242 aa).

Glu-12–Val-17 lines the ATP pocket. A Mg(2+)-binding site is contributed by Thr-16. Lys-37 is an active-site residue. Ser-41 serves as a coordination point for substrate. Residues Asp-51 and Glu-112–Gly-115 each bind ATP. Mg(2+)-binding residues include Asp-51 and Glu-112.

Belongs to the dethiobiotin synthetase family. As to quaternary structure, homodimer. It depends on Mg(2+) as a cofactor.

It is found in the cytoplasm. It carries out the reaction (7R,8S)-7,8-diammoniononanoate + CO2 + ATP = (4R,5S)-dethiobiotin + ADP + phosphate + 3 H(+). Its pathway is cofactor biosynthesis; biotin biosynthesis; biotin from 7,8-diaminononanoate: step 1/2. Catalyzes a mechanistically unusual reaction, the ATP-dependent insertion of CO2 between the N7 and N8 nitrogen atoms of 7,8-diaminopelargonic acid (DAPA, also called 7,8-diammoniononanoate) to form a ureido ring. The sequence is that of ATP-dependent dethiobiotin synthetase BioD from Bacillus anthracis (strain A0248).